Here is a 381-residue protein sequence, read N- to C-terminus: Glycerophosphocholine acyltransferase 1 (381 aa).

Topologically, residues 1–63 (MANNEDSNSN…IAKQAEEHER (63 aa)) are cytoplasmic. The chain crosses the membrane as a helical span at residues 64–84 (FINKVTHLVGVLGFGGFCFLL). Residues 85 to 89 (GARPQ) are Lumenal-facing. A helical membrane pass occupies residues 90 to 110 (DIPLVYCFFYVIFVPLRWIYY). Topologically, residues 111–116 (RFKKWH) are cytoplasmic. A helical transmembrane segment spans residues 117-137 (YYLLDFCYYANTIFLVDLLLY). Residues 138-141 (PKNE) are Lumenal-facing. A helical membrane pass occupies residues 142–162 (KLFMVCFSFAEGPLAWAIIVW). The Cytoplasmic portion of the chain corresponds to 163-173 (RCSLVFSSPDK). Residues 174–194 (IVSVLIHLLPGLVFFTIRWWN) form a helical membrane-spanning segment. Residues 195 to 223 (PATFAAMHPVGTDRRVSWPYVEDKAYLFT) lie on the Lumenal side of the membrane. A helical transmembrane segment spans residues 224–244 (WLFLVPLVVYTLWQVLYFLIV). Residues 245 to 291 (NVLRRQRLLRDPEVMTSYRELSKKAEKANNKLWQLSGLLGDQNRIWM) are Cytoplasmic-facing. Residues 292–312 (YILFQAIFTVATMALTVPIFL) form a helical membrane-spanning segment. At 313 to 315 (SYR) the chain is on the lumenal side. Residues 316–336 (LHVIFQILKISAAVWNGGSFL) traverse the membrane as a helical segment. Topologically, residues 337 to 381 (LEVMPRQVIQKEKKKKAEMQPIEEQILHHEAVSHPTENEPKSTET) are cytoplasmic.

The protein belongs to the GPC1 family.

It is found in the membrane. The catalysed reaction is sn-glycerol 3-phosphocholine + an acyl-CoA = a 1-acyl-sn-glycero-3-phosphocholine + CoA. The enzyme catalyses sn-glycero-3-phosphoethanolamine + an acyl-CoA = a monoacyl-sn-glycero-3-phosphoethanolamine + CoA. It catalyses the reaction sn-glycerol 3-phosphocholine + (9Z)-octadecenoyl-CoA = (9Z-octadecenoyl)-sn-glycero-3-phosphocholine + CoA. Its function is as follows. Glycerophosphocholine acyltransferase (GPCAT) that utilizes acyl-CoA to acylate glycero-3-phosphocholine (GPC), forming lysophosphatidylcholine (LPC). Shows broad acyl specificities with a preference for 16:0-CoA, polyunsaturated acyl-CoA, and the hydroxylated ricinoleoyl-CoA. Also catalyzes the acylation of glycero-3-phosphoethanolamine (GPE) with acyl-CoA. In addition to acyl-CoA, GPCAT efficiently utilizes LPC and lysophosphatidylethanolamine (LPE) as acyl donors in the acylation of GPC. Contributes to the maintenance of phosphatidylcholine (PC) homeostasis and might also have specific functions in acyl editing of PC, such as transferring acyl groups modified at the sn-2 position of PC to the sn-1. This Arabidopsis thaliana (Mouse-ear cress) protein is Glycerophosphocholine acyltransferase 1.